A 431-amino-acid polypeptide reads, in one-letter code: Glucose-1-phosphate adenylyltransferase (431 aa).

Lys-39 provides a ligand contact to beta-D-fructose 1,6-bisphosphate. AMP contacts are provided by Arg-40, His-46, and Arg-52. Residue Tyr-114 coordinates alpha-D-glucose 1-phosphate. An AMP-binding site is contributed by Arg-130. Alpha-D-glucose 1-phosphate contacts are provided by residues Gly-179, 194 to 195 (EK), and Ser-212. AMP contacts are provided by Glu-370 and Arg-386. Beta-D-fructose 1,6-bisphosphate contacts are provided by residues 419-423 (REMLR) and 429-431 (QER).

The protein belongs to the bacterial/plant glucose-1-phosphate adenylyltransferase family. Homotetramer.

It carries out the reaction alpha-D-glucose 1-phosphate + ATP + H(+) = ADP-alpha-D-glucose + diphosphate. It participates in glycan biosynthesis; glycogen biosynthesis. Its activity is regulated as follows. Allosterically activated by fructose-1,6-bisphosphate (F16BP) and inhibited by AMP. Functionally, involved in the biosynthesis of ADP-glucose, a building block required for the elongation reactions to produce glycogen. Catalyzes the reaction between ATP and alpha-D-glucose 1-phosphate (G1P) to produce pyrophosphate and ADP-Glc. This chain is Glucose-1-phosphate adenylyltransferase, found in Salmonella arizonae (strain ATCC BAA-731 / CDC346-86 / RSK2980).